Here is a 395-residue protein sequence, read N- to C-terminus: ATP phosphoribosyltransferase regulatory subunit (395 aa).

The protein belongs to the class-II aminoacyl-tRNA synthetase family. HisZ subfamily. In terms of assembly, heteromultimer composed of HisG and HisZ subunits.

It is found in the cytoplasm. Its pathway is amino-acid biosynthesis; L-histidine biosynthesis; L-histidine from 5-phospho-alpha-D-ribose 1-diphosphate: step 1/9. Required for the first step of histidine biosynthesis. May allow the feedback regulation of ATP phosphoribosyltransferase activity by histidine. This Pseudomonas entomophila (strain L48) protein is ATP phosphoribosyltransferase regulatory subunit.